Here is a 449-residue protein sequence, read N- to C-terminus: MGSDVRDLNALLPAVPSLGGGGGCALPVSGAAEWAPVLDFAPPGASAYGSLGGPAPPPAPPPPPPPPPHSFIKQEPSWGGAEPHEEQCLSAFTVHFSGQFTGTAGACRYEPFGPPPPSQASSGQARMFPNAPYLPSCLESQPAIRNQGYSTVTFDGTPSYGHTPSHHAAQFPNHSFKHEDPMGQQGSLGEQQYSVPPPVYGCHTSTDSCTGSQALLLRTPYSSDNLYQMTSQLECMTWNQMNLGATLKGVAAGTSSSMKWTEGQSNHGAGYESDSHATPILCGAQYRIHTHGVFRGIQDVRRVPGVAPTLVRSASETSEKRPFMCAYPGCNKRYFKLSHLQMHSRKHTGEKPYQCDFKDCERRFSRSDQLKRHQRRHTGVKPFQCKTCQRKFSRSDHLKTHTRTHTGKTSEKPFSCRWPSCQKKFARSDELVRHHNMHQRNMSKLQLAL.

The tract at residues Tyr-48–His-84 is disordered. Pro residues predominate over residues Pro-54–His-69. Residues Lys-73 and Lys-177 each participate in a glycyl lysine isopeptide (Lys-Gly) (interchain with G-Cter in SUMO) cross-link. Residues Met-236–Gly-244 carry the 9aaTAD motif. 3 consecutive C2H2-type zinc fingers follow at residues Phe-323–His-347, Tyr-353–His-377, and Phe-383–His-405. 2 important for interaction with target DNA regions span residues Ser-367–Lys-381 and Ser-393–His-401. The KTS motif signature appears at Lys-408–Ser-410. The segment at Phe-414 to His-438 adopts a C2H2-type 4 zinc-finger fold. Lys-444 is covalently cross-linked (Glycyl lysine isopeptide (Lys-Gly) (interchain with G-Cter in SUMO2)).

Belongs to the EGR C2H2-type zinc-finger protein family. Interacts with ZNF224 via the zinc-finger region. Interacts with WTAP, AMER1 and SRY. Homodimer. Interacts with WTIP. Interacts with actively translating polysomes. Detected in nuclear ribonucleoprotein (mRNP) particles. Interacts with U2AF2. Interacts with HNRNPU via the zinc-finger region. Interacts with CITED2. Interacts with RBM4.

Its subcellular location is the nucleus speckle. The protein localises to the nucleus. It localises to the nucleoplasm. The protein resides in the nucleolus. It is found in the cytoplasm. In terms of biological role, transcription factor that plays an important role in cellular development and cell survival. Recognizes and binds to the DNA sequence 5'-GCG(T/G)GGGCG-3'. Regulates the expression of numerous target genes, including EPO. Plays an essential role for development of the urogenital system. It has a tumor suppressor as well as an oncogenic role in tumor formation. Function may be isoform-specific: isoforms lacking the KTS motif may act as transcription factors. Isoforms containing the KTS motif may bind mRNA and play a role in mRNA metabolism or splicing. Isoform 1 has lower affinity for DNA, and can bind RNA. The sequence is that of Wilms tumor protein homolog (WT1) from Sus scrofa (Pig).